A 1307-amino-acid polypeptide reads, in one-letter code: tRNA(adenine(34)) deaminase, chloroplastic (1307 aa).

The N-terminal 55 residues, 1 to 55 (MFNTYTNSLQWPIRSRNQQDYCSLLPERSESYKLSKAYTSSRCYCVSSRSSCCCC), are a transit peptide targeting the chloroplast. 7 disordered regions span residues 245–377 (EYIG…ESTG), 439–458 (SSED…SSQE), 544–563 (HNPL…SHTS), 576–618 (EKRL…GQTT), 753–807 (GVIN…ATEG), 837–957 (SRAG…EEGG), and 975–1073 (LPSR…SVSA). Low complexity predominate over residues 267-278 (SSCSSYYSLASS). Residues 280–309 (EFESDTEDQEEDVEIYRENVRSSEKKVVDQ) adopt a coiled-coil conformation. Residues 281–292 (FESDTEDQEEDV) show a composition bias toward acidic residues. A compositionally biased stretch (basic and acidic residues) spans 293–321 (EIYRENVRSSEKKVVDQSAKRLKSRKEAS). Residues 367–377 (QTENRVSESTG) are compositionally biased toward polar residues. Positions 439–448 (SSEDRVSEMR) are enriched in basic and acidic residues. Composition is skewed to polar residues over residues 546-563 (PLQT…SHTS) and 582-591 (QGSTTAVQSD). Basic and acidic residues-rich tracts occupy residues 592–615 (SKVE…KKDG) and 760–771 (EEQRAESNQLKR). Over residues 852-863 (SSPNESVSSATW) the composition is skewed to polar residues. Over residues 866–883 (GREHDGSSDDNTKGDKVL) the composition is skewed to basic and acidic residues. Polar residues-rich tracts occupy residues 895-907 (VGQT…SEYP), 924-947 (SSPS…SGNQ), and 1045-1073 (SGSS…SVSA). The CMP/dCMP-type deaminase domain occupies 1108-1230 (TVDEIFMREA…RLFPGGEGNG (123 aa)). H1159 lines the Zn(2+) pocket. The active-site Proton donor is E1161. C1189 and C1192 together coordinate Zn(2+). Residues 1268–1293 (QLRRKKKDKNSDPPTPTDHHHHHLPK) form a disordered region.

The protein belongs to the cytidine and deoxycytidylate deaminase family. As to quaternary structure, homodimer. Requires Zn(2+) as cofactor.

It is found in the plastid. Its subcellular location is the chloroplast. It carries out the reaction adenosine(34) in tRNA + H2O + H(+) = inosine(34) in tRNA + NH4(+). In terms of biological role, deaminates adenosines to inosines in tRNA-Arg(ACG). Exclusively involved in A-to-I editing of the prokaryote-type chloroplast-tRNA and not involved in C-to-U editing. The sequence is that of tRNA(adenine(34)) deaminase, chloroplastic (TADA) from Arabidopsis thaliana (Mouse-ear cress).